A 1095-amino-acid polypeptide reads, in one-letter code: Inactive phospholipase C-like protein 1 (1095 aa).

Positions 1–11 are enriched in basic and acidic residues; that stretch reads MAEGAAGREDP. The disordered stretch occupies residues 1–61; the sequence is MAEGAAGRED…PGAAGTPADS (61 aa). Residues Ser47 and Ser77 each carry the phosphoserine modification. Residues 83 to 222 form an interaction with PPP1C region; the sequence is SNQKCGGRKK…IWVSGLRYLV (140 aa). Position 93 is a phosphothreonine; by PKA (Thr93). Ser95 carries the post-translational modification Phosphoserine. Residues 113-223 form the PH domain; it reads SFMQAGCELK…WVSGLRYLVS (111 aa). Residues 398–542 form the PI-PLC X-box domain; it reads QDMTQPLSHY…LKRMIIVKGK (145 aa). Positions 543–567 are interaction with GABA A beta subunit; that stretch reads KLPSDPDVLEGEVTDEDEEAEMSRR. Residue Thr556 is modified to Phosphothreonine. Ser569 bears the Phosphoserine mark. The 117-residue stretch at 585 to 701 folds into the PI-PLC Y-box domain; the sequence is LSDLVSICKS…GYVLRPSIMR (117 aa). The C2 domain occupies 701-830; it reads RDEVSYFSAN…PGYRHVPLRS (130 aa). Coiled coils occupy residues 894–914 and 1034–1059; these read LREA…IKEL and LKGQ…QLAC. Residues 1066 to 1095 are disordered; that stretch reads KAPSSSAEAKSKRSLEAIEEKESSEENGKL. The span at 1074–1095 shows a compositional bias: basic and acidic residues; the sequence is AKSKRSLEAIEEKESSEENGKL. Residue Ser1079 is modified to Phosphoserine.

In terms of assembly, interacts with PPP2CA. Interacts with Ins(1,4,5)P3, Ins(1,4,5,6)P4, GABARAP, GABA receptor beta subunits, GABA receptor gamma-2 subunits and PPP1C. May form a ternary complex with GABA receptor beta subunit and GABARAP. The formation of a ternary complex with GABA receptor beta subunit and GABARAP could be the key step for facilitating the association of GABARAP with the GABA receptor gamma-2 subunit and to allow it to be transported at the right destination. Post-translationally, phosphorylated by the catalytic subunit of PKA. Phosphorylation of Thr-93 resulted in dissociation of PPP1C from PRIP1. In terms of tissue distribution, expressed in a variety of fetal and adult organs including brain, lung and kidney. Its expression was greatly reduced in small and non-small cell lung carcinoma. Isoform 1 is predominantly expressed in brain.

It localises to the cytoplasm. Involved in an inositol phospholipid-based intracellular signaling cascade. Shows no PLC activity to phosphatidylinositol 4,5-bisphosphate and phosphatidylinositol. Component in the phospho-dependent endocytosis process of GABA A receptor. Regulates the turnover of receptors and thus contributes to the maintenance of GABA-mediated synaptic inhibition. Its aberrant expression could contribute to the genesis and progression of lung carcinoma. Acts as an inhibitor of PPP1C. This chain is Inactive phospholipase C-like protein 1 (PLCL1), found in Homo sapiens (Human).